Consider the following 272-residue polypeptide: NAD kinase (272 aa).

Residue aspartate 62 is the Proton acceptor of the active site. NAD(+) is bound by residues 62-63 (DG), arginine 67, 129-130 (NE), arginine 140, lysine 157, aspartate 159, 170-175 (SSYSSS), alanine 194, and glutamine 229.

The protein belongs to the NAD kinase family. A divalent metal cation serves as cofactor.

The protein resides in the cytoplasm. It carries out the reaction NAD(+) + ATP = ADP + NADP(+) + H(+). Involved in the regulation of the intracellular balance of NAD and NADP, and is a key enzyme in the biosynthesis of NADP. Catalyzes specifically the phosphorylation on 2'-hydroxyl of the adenosine moiety of NAD to yield NADP. The chain is NAD kinase from Thermoplasma volcanium (strain ATCC 51530 / DSM 4299 / JCM 9571 / NBRC 15438 / GSS1).